The primary structure comprises 290 residues: UPF0761 membrane protein YihY (290 aa).

Transmembrane regions (helical) follow at residues L44 to F64, V104 to L124, F140 to I160, I183 to T203, A210 to L230, and V244 to L264.

This sequence belongs to the UPF0761 family.

The protein resides in the cell inner membrane. The chain is UPF0761 membrane protein YihY from Salmonella agona (strain SL483).